The following is a 487-amino-acid chain: MSKDMKYLVLENYIGGKFVPCSKLIDSFDPSTGEVYCKVPDSGAEEVNAAVRAAKEAFPDWSAKSPADRSKVLNKLADLIEARLEEFVQAESKDQGKTITFARNVDIPRSAYNFRFFASSVLHHTNDCSQMDHMGCLNYTIRCPVGVAGLISPWNLPLYLLTWKIAPAVATGNTVVAKPSEMTSVTAWMMCQLLEEAGFPPGVVNIVFGTGPRAGDALVSHPDVPLISFTGSTATARLITERSAPHCKKLSLELGGKNPAIIFADADMEQCISTTVRSSFSNQGEICLCTSRIFVERSVYPEFLTRFVEATRRWKTGVPSDPSNDNGALISKEHLQKVKGYITLALAEGAQVHCGEGVDKLALPQQNIGGYFMLPTIISGVKDSSALMQEEIFGPVTCVTPFDEEEEVISRANNVRYGLSATVWSRDVGRVHRVARKLQAGLVWTNCWLVRDLNLPFGGMKHSGIGREGGKDSYHFFTEVKSVTVKH.

231–236 (GSTATA) serves as a coordination point for NAD(+). The Proton acceptor role is filled by E253. Catalysis depends on C287, which acts as the Nucleophile.

Belongs to the aldehyde dehydrogenase family.

The protein resides in the cytoplasm. It catalyses the reaction 2-aminomuconate 6-semialdehyde + NAD(+) + H2O = (2Z,4E)-2-aminomuconate + NADH + 2 H(+). It participates in amino-acid degradation; L-kynurenine degradation. Its function is as follows. Catalyzes the NAD-dependent oxidation of 2-aminomuconic semialdehyde of the kynurenine metabolic pathway in L-tryptophan degradation. This Danio rerio (Zebrafish) protein is 2-aminomuconic semialdehyde dehydrogenase (aldh8a1).